The following is a 426-amino-acid chain: MSIEVDWKTATSGPDGEALAERIRSFIHDKFQQVALPRFIRSVQVHSFDFGTVPPDLEIKDFCEPFADFYEEDEDDETSEVSEELVSAHGNQWHRTHSELNEPPYRDEVTMNQPLRDPFDEGFHPSPLRSPMEHLNPHFLPRAGTPGIPGGTSTIGYHLMSLGGLSGTQTPLAAVAGGTPFANGWTDHNLGPGNRGHASGPAAGAMRQHRPEDIDSSNPTSRPSTSSTLPSHPSGSNRNSGDGSHPEEEHLDDPAEPDHPFRFPKMRERRPEDFQVMCRAKYAGDVRLSLTAEILLDYPMPSFVGLPLKLNITGVTFDGVAVVAYIRKRVNFCFLSAEDADALIGADDQETRDKDDHPRSGLDPTTSPKRQGGLLREIRVESEIGRKEDGKQVLKNVGKVERFVLAQVRRIFEEELVFPSFWTFLI.

In terms of domain architecture, SMP-LTD spans 1-426 (MSIEVDWKTA…VFPSFWTFLI (426 aa)). 3 disordered regions span residues 88–147 (AHGN…GTPG), 185–264 (WTDH…FRFP), and 346–370 (ADDQETRDKDDHPRSGLDPTTSPKR). The span at 96–109 (THSELNEPPYRDEV) shows a compositional bias: basic and acidic residues. The segment covering 216–236 (SSNPTSRPSTSSTLPSHPSGS) has biased composition (low complexity). 2 stretches are compositionally biased toward basic and acidic residues: residues 244-264 (SHPEEEHLDDPAEPDHPFRFP) and 349-360 (QETRDKDDHPRS).

It belongs to the MDM12 family. Component of the ER-mitochondria encounter structure (ERMES) or MDM complex, composed of mmm1, mdm10, mdm12 and mdm34. A mmm1 homodimer associates with one molecule of mdm12 on each side in a pairwise head-to-tail manner, and the SMP-LTD domains of mmm1 and mdm12 generate a continuous hydrophobic tunnel for phospholipid trafficking.

It is found in the mitochondrion outer membrane. It localises to the endoplasmic reticulum membrane. Its function is as follows. Component of the ERMES/MDM complex, which serves as a molecular tether to connect the endoplasmic reticulum (ER) and mitochondria. Components of this complex are involved in the control of mitochondrial shape and protein biogenesis, and function in nonvesicular lipid trafficking between the ER and mitochondria. Mdm12 is required for the interaction of the ER-resident membrane protein mmm1 and the outer mitochondrial membrane-resident beta-barrel protein mdm10. The mdm12-mmm1 subcomplex functions in the major beta-barrel assembly pathway that is responsible for biogenesis of all mitochondrial outer membrane beta-barrel proteins, and acts in a late step after the SAM complex. The mdm10-mdm12-mmm1 subcomplex further acts in the TOM40-specific pathway after the action of the mdm12-mmm1 complex. Essential for establishing and maintaining the structure of mitochondria and maintenance of mtDNA nucleoids. This chain is Mitochondrial distribution and morphology protein 12, found in Aspergillus terreus (strain NIH 2624 / FGSC A1156).